Consider the following 804-residue polypeptide: Probable copper-exporting P-type ATPase (804 aa).

At 1–101 (MVKDTYISSA…VEHLSRMKRK (101 aa)) the chain is on the cytoplasmic side. Residues 16 to 82 (MERTVRVTGM…VIEDLGYGVV (67 aa)) form the HMA 1 domain. Residues Cys-27 and Cys-30 each contribute to the Cu(+) site. A helical membrane pass occupies residues 102–122 (LYVAAFAGVLLLFLAHFISLP). The Extracellular portion of the chain corresponds to 123-128 (YEDFVQ). The helical transmembrane segment at 129–149 (LLIALPAIFYSGSSIFKAAFS) threads the bilayer. Residues 150-159 (ALRRRTLNMD) lie on the Cytoplasmic side of the membrane. A helical transmembrane segment spans residues 160–180 (VMYSMGVGAAFLASVLSTAGV). Residues 181 to 186 (LPREYS) are Extracellular-facing. Residues 187 to 204 (FYETSVLLLAFLLLGRTL) form a helical membrane-spanning segment. At 205-339 (EARAKSRTGE…PIQRLADKVV (135 aa)) the chain is on the cytoplasmic side. The helical transmembrane segment at 340–360 (AYFIPTVLLVAISAFIYWYFI) threads the bilayer. Over 361–364 (AHAP) the chain is Extracellular. A helical membrane pass occupies residues 365 to 385 (LLFAFTTLIAVLVVACPCAFG). At 386–680 (LATPTALTVG…KIKQNIFWAL (295 aa)) the chain is on the cytoplasmic side. Asp-424 acts as the 4-aspartylphosphate intermediate in catalysis. Residues 457-462 (ERRSEH) and 490-501 (GEGVVADGILVG) contribute to the ATP site. Mg(2+)-binding residues include Asp-618 and Asp-622. Residues 681–701 (IYNVILIPAAAGLLYPIFGVV) form a helical membrane-spanning segment. Topologically, residues 702-704 (FRP) are extracellular. A helical transmembrane segment spans residues 705 to 725 (EFAGLAMAMSSVSVVANSLLL). The Cytoplasmic segment spans residues 726–804 (RNYVPPIRRG…AAGYQAKLRS (79 aa)). The HMA 2 domain occupies 740–801 (EKIVLELSGL…AVEAAGYQAK (62 aa)). Positions 751 and 754 each coordinate Cu(+).

The protein belongs to the cation transport ATPase (P-type) (TC 3.A.3) family. Type IB subfamily. As to quaternary structure, interacts with CopZ probably in the CopZ Cu(+)-bound form.

It localises to the cell membrane. The catalysed reaction is Cu(+)(in) + ATP + H2O = Cu(+)(out) + ADP + phosphate + H(+). With respect to regulation, activated by Cu(+) and Ag(+) and inhibited by vanadate. Activated by CopZ in its Cu(+)-bound form. Probably involved in copper and silver export. The chain is Probable copper-exporting P-type ATPase (copA) from Archaeoglobus fulgidus (strain ATCC 49558 / DSM 4304 / JCM 9628 / NBRC 100126 / VC-16).